Consider the following 165-residue polypeptide: Large ribosomal subunit protein mL49 (165 aa).

Over residues 42 to 75 (TTATTTTPLQQQQQQQPTTQPTTPIQTQTGAAPT) the composition is skewed to low complexity. A disordered region spans residues 42 to 81 (TTATTTTPLQQQQQQQPTTQPTTPIQTQTGAAPTESTKPV).

It belongs to the mitochondrion-specific ribosomal protein mL49 family. In terms of assembly, component of the mitochondrial large ribosomal subunit (mt-LSU). Mature N.crassa 74S mitochondrial ribosomes consist of a small (37S) and a large (54S) subunit. The 37S small subunit contains a 16S ribosomal RNA (16S mt-rRNA) and 32 different proteins. The 54S large subunit contains a 23S rRNA (23S mt-rRNA) and 42 different proteins.

The protein localises to the mitochondrion. Its function is as follows. Component of the mitochondrial ribosome (mitoribosome), a dedicated translation machinery responsible for the synthesis of mitochondrial genome-encoded proteins, including at least some of the essential transmembrane subunits of the mitochondrial respiratory chain. The mitoribosomes are attached to the mitochondrial inner membrane and translation products are cotranslationally integrated into the membrane. The sequence is that of Large ribosomal subunit protein mL49 (img2) from Neurospora crassa (strain ATCC 24698 / 74-OR23-1A / CBS 708.71 / DSM 1257 / FGSC 987).